A 242-amino-acid polypeptide reads, in one-letter code: Ditrans,polycis-undecaprenyl-diphosphate synthase ((2E,6E)-farnesyl-diphosphate specific) (242 aa).

The active site involves aspartate 21. A Mg(2+)-binding site is contributed by aspartate 21. Substrate contacts are provided by residues 22–25 (GNGR), tryptophan 26, arginine 34, histidine 38, and 66–68 (SSE). Asparagine 69 serves as the catalytic Proton acceptor. Substrate-binding positions include tryptophan 70, arginine 72, arginine 189, and 195-197 (RIS). Residue glutamate 208 participates in Mg(2+) binding.

The protein belongs to the UPP synthase family. Homodimer. Requires Mg(2+) as cofactor.

The catalysed reaction is 8 isopentenyl diphosphate + (2E,6E)-farnesyl diphosphate = di-trans,octa-cis-undecaprenyl diphosphate + 8 diphosphate. Catalyzes the sequential condensation of isopentenyl diphosphate (IPP) with (2E,6E)-farnesyl diphosphate (E,E-FPP) to yield (2Z,6Z,10Z,14Z,18Z,22Z,26Z,30Z,34E,38E)-undecaprenyl diphosphate (di-trans,octa-cis-UPP). UPP is the precursor of glycosyl carrier lipid in the biosynthesis of bacterial cell wall polysaccharide components such as peptidoglycan and lipopolysaccharide. In Haemophilus ducreyi (strain 35000HP / ATCC 700724), this protein is Ditrans,polycis-undecaprenyl-diphosphate synthase ((2E,6E)-farnesyl-diphosphate specific).